The sequence spans 225 residues: 2-C-methyl-D-erythritol 4-phosphate cytidylyltransferase (225 aa).

It belongs to the IspD/TarI cytidylyltransferase family. IspD subfamily.

The catalysed reaction is 2-C-methyl-D-erythritol 4-phosphate + CTP + H(+) = 4-CDP-2-C-methyl-D-erythritol + diphosphate. Its pathway is isoprenoid biosynthesis; isopentenyl diphosphate biosynthesis via DXP pathway; isopentenyl diphosphate from 1-deoxy-D-xylulose 5-phosphate: step 2/6. Catalyzes the formation of 4-diphosphocytidyl-2-C-methyl-D-erythritol from CTP and 2-C-methyl-D-erythritol 4-phosphate (MEP). This Chromobacterium violaceum (strain ATCC 12472 / DSM 30191 / JCM 1249 / CCUG 213 / NBRC 12614 / NCIMB 9131 / NCTC 9757 / MK) protein is 2-C-methyl-D-erythritol 4-phosphate cytidylyltransferase.